The sequence spans 82 residues: Delta-ctenitoxin-Pn1a (82 aa).

A signal peptide spans 1-16 (MKVAIVFLSLLVLAFA). Positions 17-34 (SESIEENREEFPVEESAR) are excised as a propeptide. Intrachain disulfides connect Cys35–Cys49, Cys42–Cys55, Cys46–Cys82, Cys48–Cys65, and Cys57–Cys63.

This sequence belongs to the neurotoxin 03 (Tx2) family. 05 subfamily. Expressed by the venom gland.

It is found in the secreted. Functionally, this neurotoxin binds at site 3 of insect voltage-activated sodium channels (Nav) and prolongs evoked axonal action potentials by a slowing down of sodium current inactivation. The toxin also inhibits glutamate uptake from rat brain synaptosomes. It reversibly inhibits the N-methyl-D-aspartate (NMDA)-subtype of ionotropic glutamate receptor (GRIN). In addition, the toxin shows antinociceptive effect in all rat pain models tested (inflammatory, neuropathic and nociceptive). The antinociceptive effect is partially blocked when selective antagonists of both mu- and delta-opioid receptors are administered, revealing that the antinociceptive effect of the toxin involves both opioid and cannabinoid endogenous systems. In vivo, it is highly toxic to house fly (Musca domestica), toxic to cockroach, but has no effect when intracerebroventricularly injected into mice. This chain is Delta-ctenitoxin-Pn1a, found in Phoneutria nigriventer (Brazilian armed spider).